A 347-amino-acid chain; its full sequence is Putative [LysW]-L-2-aminoadipate/[LysW]-L-glutamate phosphate reductase (347 aa).

9–12 is a binding site for NADP(+); that stretch reads SGYI. Residue Cys149 is part of the active site. Asn314 is a binding site for NADP(+).

Belongs to the NAGSA dehydrogenase family. Type 1 subfamily. LysY sub-subfamily.

The protein resides in the cytoplasm. The catalysed reaction is [amino-group carrier protein]-C-terminal-N-(1-carboxy-5-oxopentan-1-yl)-L-glutamine + phosphate + NADP(+) = [amino-group carrier protein]-C-terminal-N-(1-carboxy-5-phosphooxy-5-oxopentan-1-yl)-L-glutamine + NADPH + H(+). It catalyses the reaction [amino-group carrier protein]-C-terminal-gamma-(L-glutamyl-5-semialdehyde)-L-glutamate + phosphate + NADP(+) = [amino-group carrier protein]-C-terminal-gamma-(5-phospho-L-glutamyl)-L-glutamate + NADPH + H(+). It functions in the pathway amino-acid biosynthesis; L-lysine biosynthesis via AAA pathway; L-lysine from L-alpha-aminoadipate (Thermus route): step 3/5. Its pathway is amino-acid biosynthesis; L-arginine biosynthesis. In terms of biological role, involved in both the arginine and lysine biosynthetic pathways. The polypeptide is Putative [LysW]-L-2-aminoadipate/[LysW]-L-glutamate phosphate reductase (Picrophilus torridus (strain ATCC 700027 / DSM 9790 / JCM 10055 / NBRC 100828 / KAW 2/3)).